Reading from the N-terminus, the 166-residue chain is Phosphopantetheine adenylyltransferase (166 aa).

Position 11 (S11) interacts with substrate. ATP-binding positions include 11–12 (SF) and H19. Residues K43, L75, and R89 each coordinate substrate. ATP-binding positions include 90 to 92 (GLR), E100, and 125 to 131 (YGYLSSS).

The protein belongs to the bacterial CoaD family. In terms of assembly, homohexamer. Requires Mg(2+) as cofactor.

It is found in the cytoplasm. It catalyses the reaction (R)-4'-phosphopantetheine + ATP + H(+) = 3'-dephospho-CoA + diphosphate. It participates in cofactor biosynthesis; coenzyme A biosynthesis; CoA from (R)-pantothenate: step 4/5. Functionally, reversibly transfers an adenylyl group from ATP to 4'-phosphopantetheine, yielding dephospho-CoA (dPCoA) and pyrophosphate. In Syntrophotalea carbinolica (strain DSM 2380 / NBRC 103641 / GraBd1) (Pelobacter carbinolicus), this protein is Phosphopantetheine adenylyltransferase.